The chain runs to 299 residues: Biotin synthase (299 aa).

Residues 22 to 252 (TSNLKLDLCS…NVTIKIAAGR (231 aa)) enclose the Radical SAM core domain. Residues cysteine 40, cysteine 44, and cysteine 47 each coordinate [4Fe-4S] cluster. [2Fe-2S] cluster contacts are provided by cysteine 116, cysteine 176, and lysine 247.

Belongs to the radical SAM superfamily. Biotin synthase family. In terms of assembly, homodimer. [4Fe-4S] cluster is required as a cofactor. [2Fe-2S] cluster serves as cofactor.

The enzyme catalyses (4R,5S)-dethiobiotin + (sulfur carrier)-SH + 2 reduced [2Fe-2S]-[ferredoxin] + 2 S-adenosyl-L-methionine = (sulfur carrier)-H + biotin + 2 5'-deoxyadenosine + 2 L-methionine + 2 oxidized [2Fe-2S]-[ferredoxin]. It functions in the pathway cofactor biosynthesis; biotin biosynthesis; biotin from 7,8-diaminononanoate: step 2/2. Its function is as follows. Catalyzes the conversion of dethiobiotin (DTB) to biotin by the insertion of a sulfur atom into dethiobiotin via a radical-based mechanism. This Thermotoga petrophila (strain ATCC BAA-488 / DSM 13995 / JCM 10881 / RKU-1) protein is Biotin synthase.